The chain runs to 467 residues: Glutamine synthetase (467 aa).

The GS beta-grasp domain maps to 11–95 (HDVKWIDLRF…IVCDIIEPST (85 aa)). The region spanning 103–467 (PRAIARRAEE…PLEYDLYYSV (365 aa)) is the GS catalytic domain. Mg(2+) is bound by residues Glu-128 and Glu-130. ATP is bound at residue Glu-206. Positions 211 and 219 each coordinate Mg(2+). Residues 263–264 (NG) and Gly-264 each bind L-glutamate. His-268 is a Mg(2+) binding site. ATP-binding positions include 270-272 (HMS) and Ser-272. L-glutamate-binding residues include Arg-320, Glu-326, and Arg-338. Residues Arg-338, Arg-343, and Lys-351 each coordinate ATP. Mg(2+) is bound at residue Glu-356. Arg-358 is a binding site for L-glutamate. At Tyr-396 the chain carries O-AMP-tyrosine.

The protein belongs to the glutamine synthetase family. In terms of assembly, oligomer of 12 subunits arranged in the form of two hexameric ring. Requires Mg(2+) as cofactor.

Its subcellular location is the cytoplasm. The catalysed reaction is L-glutamate + NH4(+) + ATP = L-glutamine + ADP + phosphate + H(+). With respect to regulation, the activity of this enzyme could be controlled by adenylation under conditions of abundant glutamine. Its function is as follows. Catalyzes the ATP-dependent biosynthesis of glutamine from glutamate and ammonia. The chain is Glutamine synthetase from Azotobacter vinelandii.